Consider the following 397-residue polypeptide: 1-deoxy-D-xylulose 5-phosphate reductoisomerase (397 aa).

The NADPH site is built by Ser10, Gly11, Ser12, Ile13, Ala36, Arg37, and Asn124. Lys125 lines the 1-deoxy-D-xylulose 5-phosphate pocket. Glu126 contacts NADPH. A Mn(2+)-binding site is contributed by Asp150. Residues Ser151, Glu152, Ser186, and His209 each coordinate 1-deoxy-D-xylulose 5-phosphate. Mn(2+) is bound at residue Glu152. Gly215 contributes to the NADPH binding site. Residues Ser222, Asn227, Lys228, and Glu231 each contribute to the 1-deoxy-D-xylulose 5-phosphate site. Position 231 (Glu231) interacts with Mn(2+).

The protein belongs to the DXR family. Requires Mg(2+) as cofactor. It depends on Mn(2+) as a cofactor.

It carries out the reaction 2-C-methyl-D-erythritol 4-phosphate + NADP(+) = 1-deoxy-D-xylulose 5-phosphate + NADPH + H(+). It functions in the pathway isoprenoid biosynthesis; isopentenyl diphosphate biosynthesis via DXP pathway; isopentenyl diphosphate from 1-deoxy-D-xylulose 5-phosphate: step 1/6. Functionally, catalyzes the NADPH-dependent rearrangement and reduction of 1-deoxy-D-xylulose-5-phosphate (DXP) to 2-C-methyl-D-erythritol 4-phosphate (MEP). This chain is 1-deoxy-D-xylulose 5-phosphate reductoisomerase, found in Aeromonas hydrophila subsp. hydrophila (strain ATCC 7966 / DSM 30187 / BCRC 13018 / CCUG 14551 / JCM 1027 / KCTC 2358 / NCIMB 9240 / NCTC 8049).